Reading from the N-terminus, the 185-residue chain is Large ribosomal subunit protein uL5 (185 aa).

This sequence belongs to the universal ribosomal protein uL5 family. Part of the 50S ribosomal subunit; part of the 5S rRNA/L5/L18/L25 subcomplex. Contacts the 5S rRNA and the P site tRNA. Forms a bridge to the 30S subunit in the 70S ribosome.

Its function is as follows. This is one of the proteins that bind and probably mediate the attachment of the 5S RNA into the large ribosomal subunit, where it forms part of the central protuberance. In the 70S ribosome it contacts protein S13 of the 30S subunit (bridge B1b), connecting the 2 subunits; this bridge is implicated in subunit movement. Contacts the P site tRNA; the 5S rRNA and some of its associated proteins might help stabilize positioning of ribosome-bound tRNAs. The polypeptide is Large ribosomal subunit protein uL5 (Streptomyces coelicolor (strain ATCC BAA-471 / A3(2) / M145)).